Here is a 319-residue protein sequence, read N- to C-terminus: Lambda-crystallin homolog (319 aa).

Ala2 carries the post-translational modification N-acetylalanine. A Phosphoserine modification is found at Ser3. NAD(+) is bound by residues 16 to 17, Asp36, Glu97, and Lys102; that span reads LI.

It belongs to the 3-hydroxyacyl-CoA dehydrogenase family. Homodimer. As to expression, widely expressed, with highest levels in liver. Undetectable in skeletal muscle.

Its subcellular location is the cytoplasm. The enzyme catalyses L-gulonate + NAD(+) = 3-dehydro-L-gulonate + NADH + H(+). Its activity is regulated as follows. Inhibited by malonate. In terms of biological role, has high L-gulonate 3-dehydrogenase activity. It also exhibits low dehydrogenase activity toward L-3-hydroxybutyrate (HBA) and L-threonate. The chain is Lambda-crystallin homolog (Cryl1) from Mus musculus (Mouse).